Here is a 478-residue protein sequence, read N- to C-terminus: MLO-like protein 13 (478 aa).

Over 1-10 (MAEARSGSLE) the chain is Extracellular. Residues 11–31 (YTPTWVVAFICFIIVLLSLLA) traverse the membrane as a helical segment. Residues 32–60 (ERGLHHLGKCLKRRQQDALFEALQKLKEE) lie on the Cytoplasmic side of the membrane. A helical membrane pass occupies residues 61–81 (LMLLGFISLMLTVSQAAIRHI). Topologically, residues 82–145 (CVPPALVNNM…VSVEALHQLH (64 aa)) are extracellular. A helical transmembrane segment spans residues 146 to 166 (IFIFVLAVFHVIFCASTMVLG). The Cytoplasmic portion of the chain corresponds to 167–276 (GARIQQWKHW…LRTLEIDFKK (110 aa)). The next 2 helical transmembrane spans lie at 277–297 (VVSI…LNVG) and 298–318 (GWNT…MVGA). At 319–360 (KLEYIISSLALDVSEKRSRAEEAVITPSDELFWFHRPGIVLQ) the chain is on the cytoplasmic side. The helical transmembrane segment at 361-381 (LIHFILFQNSFEIAFFFWILF) threads the bilayer. Topologically, residues 382-400 (TYGIHSCIMEKLGYLIPRL) are extracellular. The chain crosses the membrane as a helical span at residues 401-421 (VMGVLVQVLCSYSTLPLYALV). Residues 422 to 478 (TQMGSKFKKGIFDNVVQSTLEGWLEDTRNRGESTSEAHRIEMQPTTPESYNVQSENP) are Cytoplasmic-facing. The calmodulin-binding stretch occupies residues 435–456 (NVVQSTLEGWLEDTRNRGESTS). Over residues 449–462 (RNRGESTSEAHRIE) the composition is skewed to basic and acidic residues. The segment at 449-478 (RNRGESTSEAHRIEMQPTTPESYNVQSENP) is disordered. A compositionally biased stretch (polar residues) spans 464–478 (QPTTPESYNVQSENP).

The protein belongs to the MLO family.

Its subcellular location is the membrane. May be involved in modulation of pathogen defense and leaf cell death. Activity seems to be regulated by Ca(2+)-dependent calmodulin binding and seems not to require heterotrimeric G proteins. In Arabidopsis thaliana (Mouse-ear cress), this protein is MLO-like protein 13 (MLO13).